The chain runs to 75 residues: UPF0291 protein lmo1304 (75 aa).

Positions 56–75 are disordered; sequence DPNGKDVTPHKVKQLRKNKY. Residues 65 to 75 are compositionally biased toward basic residues; it reads HKVKQLRKNKY.

Belongs to the UPF0291 family.

It localises to the cytoplasm. The chain is UPF0291 protein lmo1304 from Listeria monocytogenes serovar 1/2a (strain ATCC BAA-679 / EGD-e).